We begin with the raw amino-acid sequence, 330 residues long: Ketol-acid reductoisomerase (NADP(+)) (330 aa).

A KARI N-terminal Rossmann domain is found at 2–182 (VETFYEKDAD…GCTRAGVIKT (181 aa)). NADP(+) contacts are provided by residues 25–28 (YGSQ), K48, S51, S53, and 83–86 (DEVQ). Residue H108 is part of the active site. An NADP(+)-binding site is contributed by G134. Residues 183–328 (TFKEETETDL…EKLRAMMPWI (146 aa)) enclose the KARI C-terminal knotted domain. 4 residues coordinate Mg(2+): D191, E195, E227, and E231. S252 provides a ligand contact to substrate.

The protein belongs to the ketol-acid reductoisomerase family. It depends on Mg(2+) as a cofactor.

It carries out the reaction (2R)-2,3-dihydroxy-3-methylbutanoate + NADP(+) = (2S)-2-acetolactate + NADPH + H(+). The enzyme catalyses (2R,3R)-2,3-dihydroxy-3-methylpentanoate + NADP(+) = (S)-2-ethyl-2-hydroxy-3-oxobutanoate + NADPH + H(+). Its pathway is amino-acid biosynthesis; L-isoleucine biosynthesis; L-isoleucine from 2-oxobutanoate: step 2/4. The protein operates within amino-acid biosynthesis; L-valine biosynthesis; L-valine from pyruvate: step 2/4. Its function is as follows. Involved in the biosynthesis of branched-chain amino acids (BCAA). Catalyzes an alkyl-migration followed by a ketol-acid reduction of (S)-2-acetolactate (S2AL) to yield (R)-2,3-dihydroxy-isovalerate. In the isomerase reaction, S2AL is rearranged via a Mg-dependent methyl migration to produce 3-hydroxy-3-methyl-2-ketobutyrate (HMKB). In the reductase reaction, this 2-ketoacid undergoes a metal-dependent reduction by NADPH to yield (R)-2,3-dihydroxy-isovalerate. This chain is Ketol-acid reductoisomerase (NADP(+)), found in Petrotoga mobilis (strain DSM 10674 / SJ95).